A 375-amino-acid polypeptide reads, in one-letter code: 4-hydroxy-3-methylbut-2-en-1-yl diphosphate synthase (flavodoxin) (375 aa).

[4Fe-4S] cluster contacts are provided by Cys270, Cys273, Cys305, and Glu312.

This sequence belongs to the IspG family. It depends on [4Fe-4S] cluster as a cofactor.

It carries out the reaction (2E)-4-hydroxy-3-methylbut-2-enyl diphosphate + oxidized [flavodoxin] + H2O + 2 H(+) = 2-C-methyl-D-erythritol 2,4-cyclic diphosphate + reduced [flavodoxin]. The protein operates within isoprenoid biosynthesis; isopentenyl diphosphate biosynthesis via DXP pathway; isopentenyl diphosphate from 1-deoxy-D-xylulose 5-phosphate: step 5/6. In terms of biological role, converts 2C-methyl-D-erythritol 2,4-cyclodiphosphate (ME-2,4cPP) into 1-hydroxy-2-methyl-2-(E)-butenyl 4-diphosphate. In Yersinia pestis (strain Pestoides F), this protein is 4-hydroxy-3-methylbut-2-en-1-yl diphosphate synthase (flavodoxin).